The sequence spans 187 residues: Dihydrofolate reductase (187 aa).

The DHFR domain occupies 4 to 185 (PLNCIVAVSQ…IKYKFEVYEK (182 aa)). NADP(+) is bound by residues alanine 10 and 16-22 (GIGKNGD). A substrate-binding site is contributed by 31-36 (EFKYFQ). An N6-acetyllysine; alternate modification is found at lysine 33. Position 33 is an N6-succinyllysine; alternate (lysine 33). 55–57 (RKT) is a binding site for NADP(+). The substrate site is built by asparagine 65 and arginine 71. NADP(+) is bound by residues 77 to 79 (SRE) and 117 to 124 (GGSSVYQE).

This sequence belongs to the dihydrofolate reductase family. As to quaternary structure, homodimer.

It is found in the mitochondrion. Its subcellular location is the cytoplasm. The enzyme catalyses (6S)-5,6,7,8-tetrahydrofolate + NADP(+) = 7,8-dihydrofolate + NADPH + H(+). It participates in cofactor biosynthesis; tetrahydrofolate biosynthesis; 5,6,7,8-tetrahydrofolate from 7,8-dihydrofolate: step 1/1. Its function is as follows. Key enzyme in folate metabolism. Contributes to the de novo mitochondrial thymidylate biosynthesis pathway. Catalyzes an essential reaction for de novo glycine and purine synthesis, and for DNA precursor synthesis. Binds its own mRNA. In Mus musculus (Mouse), this protein is Dihydrofolate reductase (Dhfr).